A 153-amino-acid polypeptide reads, in one-letter code: Ubiquitin/ISG15-conjugating enzyme E2 L6 (153 aa).

Residues 2-149 form the UBC core domain; the sequence is TASKRVAKEL…AEEFTLQYGV (148 aa). C86 serves as the catalytic Glycyl thioester intermediate.

The protein belongs to the ubiquitin-conjugating enzyme family. In terms of assembly, interacts with RNF19A, RNF19B and RNF144B. Interacts with FLT3 (tyrosine phosphorylated). Post-translationally, ISGylated.

The enzyme catalyses S-ubiquitinyl-[E1 ubiquitin-activating enzyme]-L-cysteine + [E2 ubiquitin-conjugating enzyme]-L-cysteine = [E1 ubiquitin-activating enzyme]-L-cysteine + S-ubiquitinyl-[E2 ubiquitin-conjugating enzyme]-L-cysteine.. The protein operates within protein modification; protein ubiquitination. In terms of biological role, catalyzes the covalent attachment of ubiquitin to other proteins. Functions in the E6/E6-AP-induced ubiquitination of p53/TP53. Promotes ubiquitination and subsequent proteasomal degradation of FLT3. This chain is Ubiquitin/ISG15-conjugating enzyme E2 L6 (Ube2l6), found in Rattus norvegicus (Rat).